The primary structure comprises 212 residues: Fibrillarin-like rRNA/tRNA 2'-O-methyltransferase (212 aa).

S-adenosyl-L-methionine is bound by residues Thr-76–Thr-77, Glu-94–Leu-95, Asp-119–Ala-120, and Asp-139–Gln-142.

The protein belongs to the methyltransferase superfamily. Fibrillarin family. As to quaternary structure, interacts with nop5. Component of box C/D small ribonucleoprotein (sRNP) particles that contain rpl7ae, FlpA and nop5, plus a guide RNA.

Involved in pre-rRNA and tRNA processing. Utilizes the methyl donor S-adenosyl-L-methionine to catalyze the site-specific 2'-hydroxyl methylation of ribose moieties in rRNA and tRNA. Site specificity is provided by a guide RNA that base pairs with the substrate. Methylation occurs at a characteristic distance from the sequence involved in base pairing with the guide RNA. The polypeptide is Fibrillarin-like rRNA/tRNA 2'-O-methyltransferase (Picrophilus torridus (strain ATCC 700027 / DSM 9790 / JCM 10055 / NBRC 100828 / KAW 2/3)).